The following is a 1960-amino-acid chain: Exophilin-5 (1960 aa).

The 57-residue stretch at 7-63 folds into the RabBD domain; that stretch reads GFDFSFLNEEEARKILQVLERNEELRRAEKDRISKLQKTKRDIRWLQGATGEWFEEI. Polar residues-rich tracts occupy residues 325 to 334, 342 to 366, and 635 to 645; these read ASPATGSFTA, DTQNKSSFTPVRHQQSPKRTPLSSI, and SQSSSFPDSTA. Disordered regions lie at residues 325-366, 616-645, 672-720, 734-835, and 910-976; these read ASPA…LSSI, TPASSFRTPFPLSPDDGRESQSSSFPDSTA, HSTD…TGLP, DFQN…SSNT, and FSRS…KGRV. Residues 673-682 are compositionally biased toward low complexity; the sequence is STDSLSLTDT. The segment covering 692–707 has biased composition (basic and acidic residues); the sequence is NSEKDMDVSVSKDEQL. Serine 799 and serine 802 each carry phosphoserine. 2 stretches are compositionally biased toward polar residues: residues 808–835 and 910–920; these read ESGTATSLPSPNQGCHQKTGSNEESSNT and FSRSLSDQDPG. A compositionally biased stretch (basic and acidic residues) spans 921–932; the sequence is QEQREEKDKATK. Positions 933-945 are enriched in polar residues; it reads SQDNQLAVNSTDN. Serine 1027 carries the post-translational modification Phosphoserine. Residues 1035–1095 form a disordered region; the sequence is QESKGTVASV…PKATKKMTDM (61 aa). Over residues 1062-1074 the composition is skewed to polar residues; the sequence is GKSTSDKPSSPES. Phosphoserine occurs at positions 1083 and 1117. 3 disordered regions span residues 1291-1375, 1389-1493, and 1510-1759; these read AQVQ…LSRE, PLLH…DSES, and EAQP…EPHL. The segment covering 1318–1336 has biased composition (basic and acidic residues); that stretch reads PESKDVSQLPDRETSKSTL. A compositionally biased stretch (polar residues) spans 1356–1365; the sequence is KEISPSNVSK. The span at 1392 to 1403 shows a compositional bias: basic and acidic residues; it reads HQEKGAGKEHTK. Polar residues-rich tracts occupy residues 1470-1493 and 1520-1533; these read RETSGTTGSDCQNPTDKMLSDSES and SEASQAGSQETNTA. Serine 1493 carries the post-translational modification Phosphoserine. Composition is skewed to basic and acidic residues over residues 1534–1546 and 1561–1571; these read EMRKVEDEEHMLT and TNTDETKDRYS. The span at 1572–1586 shows a compositional bias: basic residues; the sequence is GKHRLAAISKASKRI. Positions 1637–1657 are enriched in polar residues; it reads ESSQMNVDKSETLLQETTVSS. A phosphoserine mark is found at serine 1724, serine 1739, serine 1789, and serine 1819. The span at 1732–1741 shows a compositional bias: polar residues; it reads TQKSTINSHC. 2 disordered regions span residues 1828-1847 and 1906-1960; these read ESESWTSYSNRTRGPKSTSS and VNSP…ESEL. Acidic residues predominate over residues 1939 to 1950; it reads WDTDTTTDDEYY. Basic and acidic residues predominate over residues 1951-1960; sequence LDEKDKESEL.

As to quaternary structure, interacts with RAB27A.

In terms of biological role, may act as Rab effector protein and play a role in vesicle trafficking. The polypeptide is Exophilin-5 (Mus musculus (Mouse)).